A 115-amino-acid polypeptide reads, in one-letter code: T cell receptor beta variable 2 (115 aa).

The N-terminal stretch at methionine 1–threonine 19 is a signal peptide. One can recognise an Ig-like domain in the interval proline 21 to glutamate 115. A disulfide bridge connects residues cysteine 42 and cysteine 111. Asparagine 93 is a glycosylation site (N-linked (GlcNAc...) asparagine).

In terms of assembly, alpha-beta TR is a heterodimer composed of an alpha and beta chain; disulfide-linked. The alpha-beta TR is associated with the transmembrane signaling CD3 coreceptor proteins to form the TR-CD3 (TcR or TCR). The assembly of alpha-beta TR heterodimers with CD3 occurs in the endoplasmic reticulum where a single alpha-beta TR heterodimer associates with one CD3D-CD3E heterodimer, one CD3G-CD3E heterodimer and one CD247 homodimer forming a stable octameric structure. CD3D-CD3E and CD3G-CD3E heterodimers preferentially associate with TR alpha and TR beta chains, respectively. The association of the CD247 homodimer is the last step of TcR assembly in the endoplasmic reticulum and is required for transport to the cell surface.

It localises to the cell membrane. Its function is as follows. V region of the variable domain of T cell receptor (TR) beta chain that participates in the antigen recognition. Alpha-beta T cell receptors are antigen specific receptors which are essential to the immune response and are present on the cell surface of T lymphocytes. Recognize peptide-major histocompatibility (MH) (pMH) complexes that are displayed by antigen presenting cells (APC), a prerequisite for efficient T cell adaptive immunity against pathogens. Binding of alpha-beta TR to pMH complex initiates TR-CD3 clustering on the cell surface and intracellular activation of LCK that phosphorylates the ITAM motifs of CD3G, CD3D, CD3E and CD247 enabling the recruitment of ZAP70. In turn ZAP70 phosphorylates LAT, which recruits numerous signaling molecules to form the LAT signalosome. The LAT signalosome propagates signal branching to three major signaling pathways, the calcium, the mitogen-activated protein kinase (MAPK) kinase and the nuclear factor NF-kappa-B (NF-kB) pathways, leading to the mobilization of transcription factors that are critical for gene expression and essential for T cell growth and differentiation. The T cell repertoire is generated in the thymus, by V-(D)-J rearrangement. This repertoire is then shaped by intrathymic selection events to generate a peripheral T cell pool of self-MH restricted, non-autoaggressive T cells. Post-thymic interaction of alpha-beta TR with the pMH complexes shapes TR structural and functional avidity. The polypeptide is T cell receptor beta variable 2 (Homo sapiens (Human)).